The sequence spans 303 residues: ATP synthase gamma chain (303 aa).

This sequence belongs to the ATPase gamma chain family. In terms of assembly, F-type ATPases have 2 components, CF(1) - the catalytic core - and CF(0) - the membrane proton channel. CF(1) has five subunits: alpha(3), beta(3), gamma(1), delta(1), epsilon(1). CF(0) has three main subunits: a, b and c.

It is found in the cell membrane. Produces ATP from ADP in the presence of a proton gradient across the membrane. The gamma chain is believed to be important in regulating ATPase activity and the flow of protons through the CF(0) complex. The chain is ATP synthase gamma chain from Nocardioides sp. (strain ATCC BAA-499 / JS614).